The sequence spans 209 residues: Small ribosomal subunit protein uS4 (209 aa).

Residues 99-159 form the S4 RNA-binding domain; sequence SRLDSVCYRM…EKSKAQLRIK (61 aa).

This sequence belongs to the universal ribosomal protein uS4 family. Part of the 30S ribosomal subunit. Contacts protein S5. The interaction surface between S4 and S5 is involved in control of translational fidelity.

Its function is as follows. One of the primary rRNA binding proteins, it binds directly to 16S rRNA where it nucleates assembly of the body of the 30S subunit. In terms of biological role, with S5 and S12 plays an important role in translational accuracy. This Thiobacillus denitrificans (strain ATCC 25259 / T1) protein is Small ribosomal subunit protein uS4.